A 368-amino-acid chain; its full sequence is Alanine racemase (368 aa).

Lys-35 functions as the Proton acceptor; specific for D-alanine in the catalytic mechanism. Lys-35 carries the N6-(pyridoxal phosphate)lysine modification. Arg-130 serves as a coordination point for substrate. Tyr-253 serves as the catalytic Proton acceptor; specific for L-alanine. Met-305 contributes to the substrate binding site.

This sequence belongs to the alanine racemase family. Requires pyridoxal 5'-phosphate as cofactor.

It carries out the reaction L-alanine = D-alanine. It functions in the pathway amino-acid biosynthesis; D-alanine biosynthesis; D-alanine from L-alanine: step 1/1. Functionally, catalyzes the interconversion of L-alanine and D-alanine. May also act on other amino acids. This chain is Alanine racemase (alr), found in Cupriavidus metallidurans (strain ATCC 43123 / DSM 2839 / NBRC 102507 / CH34) (Ralstonia metallidurans).